Consider the following 34-residue polypeptide: uncharacterized protein (34 aa).

Residues 1–34 (MRLRRLFKQPSTRVLGVTNCPRQQGHQKRREQPD) form a disordered region. The span at 25 to 34 (GHQKRREQPD) shows a compositional bias: basic residues.

This is an uncharacterized protein from Schizosaccharomyces pombe (strain 972 / ATCC 24843) (Fission yeast).